The sequence spans 84 residues: Small ribosomal subunit protein uS17 (84 aa).

The protein belongs to the universal ribosomal protein uS17 family. Part of the 30S ribosomal subunit.

One of the primary rRNA binding proteins, it binds specifically to the 5'-end of 16S ribosomal RNA. This chain is Small ribosomal subunit protein uS17, found in Karelsulcia muelleri (strain GWSS) (Sulcia muelleri).